The sequence spans 332 residues: Transaldolase (332 aa).

Lys-135 serves as the catalytic Schiff-base intermediate with substrate.

Belongs to the transaldolase family. Type 1 subfamily. Homodimer.

It localises to the cytoplasm. It carries out the reaction D-sedoheptulose 7-phosphate + D-glyceraldehyde 3-phosphate = D-erythrose 4-phosphate + beta-D-fructose 6-phosphate. The protein operates within carbohydrate degradation; pentose phosphate pathway; D-glyceraldehyde 3-phosphate and beta-D-fructose 6-phosphate from D-ribose 5-phosphate and D-xylulose 5-phosphate (non-oxidative stage): step 2/3. Its function is as follows. Transaldolase is important for the balance of metabolites in the pentose-phosphate pathway. This chain is Transaldolase, found in Prochlorococcus marinus (strain NATL1A).